Consider the following 573-residue polypeptide: Membrane protein insertase YidC (573 aa).

6 helical membrane passes run 6-26, 355-375, 379-399, 446-466, 488-508, and 524-544; these read VFLI…WGKD, FSIM…LHSF, WGWA…PLSA, GGCL…WVLV, PYFI…KLTP, and PLVF…YWVV.

The protein belongs to the OXA1/ALB3/YidC family. Type 1 subfamily. As to quaternary structure, interacts with the Sec translocase complex via SecD. Specifically interacts with transmembrane segments of nascent integral membrane proteins during membrane integration.

It localises to the cell inner membrane. Its function is as follows. Required for the insertion and/or proper folding and/or complex formation of integral membrane proteins into the membrane. Involved in integration of membrane proteins that insert both dependently and independently of the Sec translocase complex, as well as at least some lipoproteins. Aids folding of multispanning membrane proteins. The polypeptide is Membrane protein insertase YidC (Xanthomonas campestris pv. campestris (strain ATCC 33913 / DSM 3586 / NCPPB 528 / LMG 568 / P 25)).